Consider the following 328-residue polypeptide: Nickel import system permease protein NikB (328 aa).

Transmembrane regions (helical) follow at residues 11–31 (LMQM…LMKL), 104–124 (LLIS…LGII), 139–159 (VIST…LLFI), 170–190 (ILSQ…AYII), 229–249 (ILPI…GTVV), and 279–299 (VLFI…LTLL). One can recognise an ABC transmembrane type-1 domain in the interval 100–297 (APITLLISFS…IINTIADLLT (198 aa)).

This sequence belongs to the binding-protein-dependent transport system permease family. OppBC subfamily. The complex is composed of two ATP-binding proteins (NikD and NikE), two transmembrane proteins (NikB and NikC) and a solute-binding protein (NikA).

It localises to the cell membrane. Its function is as follows. Part of the ABC transporter complex NikABCDE (Opp2) involved in nickel import. Probably responsible for the translocation of the substrate across the membrane. This is Nickel import system permease protein NikB from Staphylococcus aureus (strain bovine RF122 / ET3-1).